Reading from the N-terminus, the 415-residue chain is Phosphoribosylamine--glycine ligase (415 aa).

Residues 108-311 (KKIMEKYNIP…LMQHIIDLDE (204 aa)) form the ATP-grasp domain. 134 to 191 (IENCELPVVVKKDGLAAGKGVIIADTIEAARSAIEIMYGDEEEGTVVFETFLEGEEFS) lines the ATP pocket. Mg(2+) is bound by residues Glu281 and Asn283.

This sequence belongs to the GARS family. It depends on Mg(2+) as a cofactor. Mn(2+) is required as a cofactor.

The enzyme catalyses 5-phospho-beta-D-ribosylamine + glycine + ATP = N(1)-(5-phospho-beta-D-ribosyl)glycinamide + ADP + phosphate + H(+). It functions in the pathway purine metabolism; IMP biosynthesis via de novo pathway; N(1)-(5-phospho-D-ribosyl)glycinamide from 5-phospho-alpha-D-ribose 1-diphosphate: step 2/2. This chain is Phosphoribosylamine--glycine ligase, found in Staphylococcus aureus (strain MW2).